A 334-amino-acid polypeptide reads, in one-letter code: Leucine-rich repeat-containing protein 26 (334 aa).

The first 30 residues, 1 to 30, serve as a signal peptide directing secretion; sequence MRGSFFSRLPPQLSLLLLLLLLLSWRRVWT. Topologically, residues 31-265 are extracellular; that stretch reads QEHIGTDPSK…QCTQSLAARD (235 aa). One can recognise an LRRNT domain in the interval 38–75; sequence PSKSPVAPVCPEACSCSPGGKANCSALALPAVPAGLSW. 2 cysteine pairs are disulfide-bonded: Cys47–Cys53 and Cys51–Cys61. 5 LRR repeats span residues 76–97, 100–121, 124–145, 148–169, and 172–194; these read QVRSLLLDRNRVSTLPPGAFAD, ALLYLVLRENRLRSVHARAFWG, VLQRLDLSSNQLETLSPGTFTP, ALSFLSLAGNRLALLEPSILGP, and LLRVLSLQDNSLSALEAGLLNSL. The region spanning 205–259 is the LRRCT domain; that stretch reads NPWACSCALRPLCTWLRKHPRPTSETETLLCVSPKLQTLNLLTDFPDNAFKQCTQ. Disulfide bonds link Cys209–Cys235 and Cys211–Cys257. Residues 266–286 form a helical membrane-spanning segment; sequence LAVVYALGPASFLASLAICLA. Topologically, residues 287–334 are cytoplasmic; sequence LGSVLTACGARRRRRRTTVRHLIRRQPDPEGPASLEDVGSPTTTAIQA. The tract at residues 312 to 334 is disordered; it reads QPDPEGPASLEDVGSPTTTAIQA.

In terms of assembly, interacts with KCNMA1.

It localises to the cell membrane. Its subcellular location is the cytoplasm. The protein localises to the cytoskeleton. Functionally, auxiliary protein of the large-conductance, voltage and calcium-activated potassium channel (BK alpha). Required for the conversion of BK alpha channels from a high-voltage to a low-voltage activated channel type in non-excitable cells. These are characterized by negative membrane voltages and constant low levels of calcium. The polypeptide is Leucine-rich repeat-containing protein 26 (Lrrc26) (Rattus norvegicus (Rat)).